Here is a 215-residue protein sequence, read N- to C-terminus: uncharacterized protein (215 aa).

It is found in the mitochondrion. This is an uncharacterized protein from Arabidopsis thaliana (Mouse-ear cress).